Here is a 194-residue protein sequence, read N- to C-terminus: MAEEKQNEELNEQEELNETEAETAEAEQTAAEADAPAEETQTEMLEKQLKELQERLEEKENKLLRVQADFENYKRRARLDLEAAEKYRSQRIISDLLPALDNFERALQIDPDNEQTKSLLQGMEMVHRQILEALKNEGVEQIPSVGEQFDPNMHQAVMQVEDEAYESNAVVEELQKGYKLKDRVIRPSMVKVNQ.

The segment at 1-44 (MAEEKQNEELNEQEELNETEAETAEAEQTAAEADAPAEETQTEM) is disordered. The span at 9–25 (ELNEQEELNETEAETAE) shows a compositional bias: acidic residues.

The protein belongs to the GrpE family. Homodimer.

Its subcellular location is the cytoplasm. Functionally, participates actively in the response to hyperosmotic and heat shock by preventing the aggregation of stress-denatured proteins, in association with DnaK and GrpE. It is the nucleotide exchange factor for DnaK and may function as a thermosensor. Unfolded proteins bind initially to DnaJ; upon interaction with the DnaJ-bound protein, DnaK hydrolyzes its bound ATP, resulting in the formation of a stable complex. GrpE releases ADP from DnaK; ATP binding to DnaK triggers the release of the substrate protein, thus completing the reaction cycle. Several rounds of ATP-dependent interactions between DnaJ, DnaK and GrpE are required for fully efficient folding. The chain is Protein GrpE from Bacillus licheniformis (strain ATCC 14580 / DSM 13 / JCM 2505 / CCUG 7422 / NBRC 12200 / NCIMB 9375 / NCTC 10341 / NRRL NRS-1264 / Gibson 46).